Reading from the N-terminus, the 130-residue chain is Large ribosomal subunit protein bL12 (130 aa).

Residues 94–114 are disordered; that stretch reads MTEGLPKTVKEKTSKSDAEDT.

It belongs to the bacterial ribosomal protein bL12 family. Homodimer. Part of the ribosomal stalk of the 50S ribosomal subunit. Forms a multimeric L10(L12)X complex, where L10 forms an elongated spine to which 2 to 4 L12 dimers bind in a sequential fashion. Binds GTP-bound translation factors.

Forms part of the ribosomal stalk which helps the ribosome interact with GTP-bound translation factors. Is thus essential for accurate translation. In Chlamydia caviae (strain ATCC VR-813 / DSM 19441 / 03DC25 / GPIC) (Chlamydophila caviae), this protein is Large ribosomal subunit protein bL12.